The chain runs to 274 residues: 2,3,4,5-tetrahydropyridine-2,6-dicarboxylate N-succinyltransferase (274 aa).

This sequence belongs to the transferase hexapeptide repeat family.

It is found in the cytoplasm. The catalysed reaction is (S)-2,3,4,5-tetrahydrodipicolinate + succinyl-CoA + H2O = (S)-2-succinylamino-6-oxoheptanedioate + CoA. The protein operates within amino-acid biosynthesis; L-lysine biosynthesis via DAP pathway; LL-2,6-diaminopimelate from (S)-tetrahydrodipicolinate (succinylase route): step 1/3. The protein is 2,3,4,5-tetrahydropyridine-2,6-dicarboxylate N-succinyltransferase of Escherichia coli (strain SMS-3-5 / SECEC).